Reading from the N-terminus, the 689-residue chain is Glycine--tRNA ligase beta subunit (689 aa).

The protein belongs to the class-II aminoacyl-tRNA synthetase family. In terms of assembly, tetramer of two alpha and two beta subunits.

It localises to the cytoplasm. The catalysed reaction is tRNA(Gly) + glycine + ATP = glycyl-tRNA(Gly) + AMP + diphosphate. The protein is Glycine--tRNA ligase beta subunit of Shewanella sediminis (strain HAW-EB3).